A 216-amino-acid chain; its full sequence is uncharacterized protein (216 aa).

Residues 5 to 25 (YVKALVAVTVALGVLLPSTIS) traverse the membrane as a helical segment. Low complexity-rich tracts occupy residues 28-67 (KSFS…SSSS) and 89-108 (KASS…ATSK). The tract at residues 28–115 (KSFSGRSSSS…TSKVTGKTYS (88 aa)) is disordered. The next 2 helical transmembrane spans lie at 137-157 (GFAP…MFMI) and 183-203 (IAWI…IALI).

It localises to the cell membrane. This is an uncharacterized protein from Bacillus subtilis (strain 168).